Consider the following 461-residue polypeptide: DNA polymerase delta subunit 3 (461 aa).

Disordered stretches follow at residues 148–229 (VAQA…SAKG), 249–380 (VPGQ…KRVL), and 399–461 (YESE…CQKK). A compositionally biased stretch (polar residues) spans 155 to 172 (ARSSSQTPSDTSAVSTPP). Positions 205 to 214 (DANKEPKAKE) are enriched in basic and acidic residues. Residues 215 to 228 (APSVSAASSKPSAK) are compositionally biased toward low complexity. The segment covering 279–304 (KPGRKTEPAKIQQKDKKSKMKRMDKS) has biased composition (basic and acidic residues). The segment covering 371 to 380 (GKKRKRKRVL) has biased composition (basic residues). Residues 427-436 (VKKEPKEERK) are compositionally biased toward basic and acidic residues. The short motif at 451–458 (QISIMGFC) is the PIP-box element.

In terms of assembly, component of both the DNA polymerase delta and DNA polymerase zeta complexes. The tetrameric DNA polymerase delta complex (Pol-delta4), which consists of POLD1/p125, POLD2/p50, POLD3/p66/p68 and POLD4/p12, with POLD1 bearing DNA polymerase and 3' to 5' proofreading exonuclease activities.

The protein resides in the cytoplasm. It localises to the nucleus. Accessory component of both the DNA polymerase delta complex and the DNA polymerase zeta complex. As a component of the trimeric and tetrameric DNA polymerase delta complexes (Pol-delta3 and Pol-delta4, respectively), plays a role in high fidelity genome replication, including in lagging strand synthesis, and repair. Required for optimal Pol-delta activity. Stabilizes the Pol-delta complex and plays a major role in Pol-delta stimulation by PCNA. Pol-delta3 and Pol-delta4 are characterized by the absence or the presence of POLD4. They exhibit differences in catalytic activity. Most notably, Pol-delta3 shows higher proofreading activity than Pol-delta4. Although both Pol-delta3 and Pol-delta4 process Okazaki fragments in vitro, Pol-delta3 may also be better suited to fulfill this task, exhibiting near-absence of strand displacement activity compared to Pol-delta4 and stalling on encounter with the 5'-blocking oligonucleotides. Pol-delta3 idling process may avoid the formation of a gap, while maintaining a nick that can be readily ligated. Along with DNA polymerase kappa, DNA polymerase delta carries out approximately half of nucleotide excision repair (NER) synthesis following UV irradiation. In this context, POLD3, along with PCNA and RFC1-replication factor C complex, is required to recruit POLD1, the catalytic subunit of the polymerase delta complex, to DNA damage sites. Under conditions of DNA replication stress, required for the repair of broken replication forks through break-induced replication (BIR). Involved in the translesion synthesis (TLS) of templates carrying O6-methylguanine or abasic sites performed by Pol-delta4, independently of DNA polymerase zeta (REV3L) or eta (POLH). Facilitates abasic site bypass by DNA polymerase delta by promoting extension from the nucleotide inserted opposite the lesion. Also involved in TLS, as a component of the tetrameric DNA polymerase zeta complex. Along with POLD2, dramatically increases the efficiency and processivity of DNA synthesis of the DNA polymerase zeta complex compared to the minimal zeta complex, consisting of only REV3L and REV7. The chain is DNA polymerase delta subunit 3 (POLD3) from Gallus gallus (Chicken).